A 92-amino-acid polypeptide reads, in one-letter code: Small cysteine and glycine repeat-containing protein 9 (92 aa).

The interval Cys-4–Gly-72 is 11 X 2 AA repeats of CG.

It belongs to the KRTAP type 28 family.

In the hair cortex, hair keratin intermediate filaments are embedded in an interfilamentous matrix, consisting of hair keratin-associated proteins (KRTAP), which are essential for the formation of a rigid and resistant hair shaft through their extensive disulfide bond cross-linking with abundant cysteine residues of hair keratins. The matrix proteins include the high-sulfur and high-glycine-tyrosine keratins. This chain is Small cysteine and glycine repeat-containing protein 9, found in Homo sapiens (Human).